A 176-amino-acid chain; its full sequence is ATP-dependent protease subunit HslV (176 aa).

The active site involves Thr-5. Residues Ala-161, Cys-164, and Thr-167 each coordinate Na(+).

Belongs to the peptidase T1B family. HslV subfamily. In terms of assembly, a double ring-shaped homohexamer of HslV is capped on each side by a ring-shaped HslU homohexamer. The assembly of the HslU/HslV complex is dependent on binding of ATP.

It is found in the cytoplasm. It carries out the reaction ATP-dependent cleavage of peptide bonds with broad specificity.. Its activity is regulated as follows. Allosterically activated by HslU binding. In terms of biological role, protease subunit of a proteasome-like degradation complex believed to be a general protein degrading machinery. This is ATP-dependent protease subunit HslV from Caldicellulosiruptor bescii (strain ATCC BAA-1888 / DSM 6725 / KCTC 15123 / Z-1320) (Anaerocellum thermophilum).